Consider the following 358-residue polypeptide: Magnesium-protoporphyrin IX monomethyl ester [oxidative] cyclase 2 (358 aa).

The protein belongs to the AcsF family. The cofactor is Fe cation.

It carries out the reaction Mg-protoporphyrin IX 13-monomethyl ester + 3 NADPH + 3 O2 + 2 H(+) = 3,8-divinyl protochlorophyllide a + 3 NADP(+) + 5 H2O. The protein operates within porphyrin-containing compound metabolism; chlorophyll biosynthesis (light-independent). Functionally, catalyzes the formation of the isocyclic ring in chlorophyll biosynthesis. Mediates the cyclase reaction, which results in the formation of divinylprotochlorophyllide (Pchlide) characteristic of all chlorophylls from magnesium-protoporphyrin IX 13-monomethyl ester (MgPMME). The polypeptide is Magnesium-protoporphyrin IX monomethyl ester [oxidative] cyclase 2 (Nostoc sp. (strain PCC 7120 / SAG 25.82 / UTEX 2576)).